The chain runs to 250 residues: LexA repressor (250 aa).

The span at 1-21 (MTSQERGTRRGDTRGNVRDFP) shows a compositional bias: basic and acidic residues. The disordered stretch occupies residues 1-33 (MTSQERGTRRGDTRGNVRDFPDSPADASGLTQR). The segment at residues 54–74 (VREIGEAVGLTSTSSVAHQLK) is a DNA-binding region (H-T-H motif). Active-site for autocatalytic cleavage activity residues include S174 and K211.

The protein belongs to the peptidase S24 family. In terms of assembly, homodimer.

It catalyses the reaction Hydrolysis of Ala-|-Gly bond in repressor LexA.. In terms of biological role, represses a number of genes involved in the response to DNA damage (SOS response), including recA and lexA. In the presence of single-stranded DNA, RecA interacts with LexA causing an autocatalytic cleavage which disrupts the DNA-binding part of LexA, leading to derepression of the SOS regulon and eventually DNA repair. This Parafrankia sp. (strain EAN1pec) protein is LexA repressor.